The primary structure comprises 647 residues: Serine/threonine-protein kinase PLK3 (647 aa).

Residues 1 to 56 (MEPAAGFLSPRPFPRAAAPSSPPAGPGPPASASPRSEPGVLAGPQTPDASRLITDP) form a disordered region. Over residues 20–31 (SSPPAGPGPPAS) the composition is skewed to pro residues. The Protein kinase domain maps to 62–314 (YIKGRLLGKG…IEQILRHDFF (253 aa)). ATP-binding positions include 68-76 (LGKGGFARC) and Lys-91. Asp-185 serves as the catalytic Proton acceptor. 2 consecutive POLO box domains span residues 464 to 542 (WVSK…YMEQ) and 563 to 646 (LLLQ…DRSP).

It belongs to the protein kinase superfamily. Ser/Thr protein kinase family. CDC5/Polo subfamily. As to quaternary structure, interacts with GOLGB1. Interacts (via the POLO-box domain) with CIB1; leading to inhibit PLK3 kinase activity. Post-translationally, phosphorylated in an ATM-dependent manner following DNA damage. Phosphorylated as cells enter mitosis and dephosphorylated as cells exit mitosis. In terms of tissue distribution, constitutively expressed in post-mitotic neurons.

It localises to the cell projection. The protein localises to the dendrite. The protein resides in the cytoplasm. It is found in the nucleus. Its subcellular location is the nucleolus. It localises to the golgi apparatus. The protein localises to the cytoskeleton. The protein resides in the microtubule organizing center. It is found in the centrosome. The catalysed reaction is L-seryl-[protein] + ATP = O-phospho-L-seryl-[protein] + ADP + H(+). It catalyses the reaction L-threonyl-[protein] + ATP = O-phospho-L-threonyl-[protein] + ADP + H(+). Functionally, serine/threonine-protein kinase involved in cell cycle regulation, response to stress and Golgi disassembly. Polo-like kinases act by binding and phosphorylating proteins that are already phosphorylated on a specific motif recognized by the POLO box domains. Phosphorylates ATF2, BCL2L1, CDC25A, CDC25C, CHEK2, HIF1A, JUN, p53/TP53, p73/TP73, PTEN, TOP2A and VRK1. Involved in cell cycle regulation: required for entry into S phase and cytokinesis. Phosphorylates BCL2L1, leading to regulate the G2 checkpoint and progression to cytokinesis during mitosis. Plays a key role in response to stress: rapidly activated upon stress stimulation, such as ionizing radiation, reactive oxygen species (ROS), hyperosmotic stress, UV irradiation and hypoxia. Involved in DNA damage response and G1/S transition checkpoint by phosphorylating CDC25A, p53/TP53 and p73/TP73. Phosphorylates p53/TP53 in response to reactive oxygen species (ROS), thereby promoting p53/TP53-mediated apoptosis. Phosphorylates CHEK2 in response to DNA damage, promoting the G2/M transition checkpoint. Phosphorylates the transcription factor p73/TP73 in response to DNA damage, leading to inhibit p73/TP73-mediated transcriptional activation and pro-apoptotic functions. Phosphorylates HIF1A and JUN is response to hypoxia. Phosphorylates ATF2 following hyperosmotic stress in corneal epithelium. Also involved in Golgi disassembly during the cell cycle: part of a MEK1/MAP2K1-dependent pathway that induces Golgi fragmentation during mitosis by mediating phosphorylation of VRK1. May participate in endomitotic cell cycle, a form of mitosis in which both karyokinesis and cytokinesis are interrupted and is a hallmark of megakaryocyte differentiation, via its interaction with CIB1. The chain is Serine/threonine-protein kinase PLK3 (Plk3) from Rattus norvegicus (Rat).